Consider the following 227-residue polypeptide: Triggering receptor expressed on myeloid cells 2 (227 aa).

A signal peptide spans 1 to 18 (MGPLHQFLLLLITALSQA). Topologically, residues 19–171 (LNTTVLQGMA…NQETSFPPTS (153 aa)) are extracellular. Asparagine 20 carries an N-linked (GlcNAc...) asparagine glycan. Positions 29–112 (GQSLRVSCTY…GDAGLYQCQS (84 aa)) constitute an Ig-like V-type domain. 2 disulfide bridges follow: cysteine 36-cysteine 110 and cysteine 51-cysteine 60. Histidine 67 contributes to the a 1,2-diacyl-sn-glycero-3-phospho-L-serine binding site. Asparagine 79 carries N-linked (GlcNAc...) asparagine glycosylation. Threonine 88 contacts a 1,2-diacyl-sn-glycero-3-phospho-L-serine. A helical membrane pass occupies residues 172–192 (ILLLLACVLLSKFLAASILWA). Residues 193–227 (VARGRQKPGTPVVRGLDCGQDAGHQLQILTGPGGT) lie on the Cytoplasmic side of the membrane.

In terms of assembly, monomer. After ectodomain shedding, the extracellular domain oligomerizes, which is enhanced and stabilized by binding of phosphatidylserine. Interacts with TYROBP/DAP12. Interaction with TYROBP is required for stabilization of the TREM2 C-terminal fragment (TREM2-CTF) which is produced by proteolytic processing. Interacts with PLXNA1 (via TIG domains); the interaction mediates SEMA6D binding and signaling through TYROBP. In terms of processing, undergoes ectodomain shedding through proteolytic cleavage by ADAM10 and ADAM17 to produce a transmembrane segment, the TREM2 C-terminal fragment (TREM2-CTF), which is subsequently cleaved by gamma-secretase. In terms of tissue distribution, expressed in the brain, specifically in microglia (at protein level). Expressed in macrophages (at protein level). Expressed at higher levels in the CNS, heart and lung than in lymph nodes or in other non-lymphoid tissues such as kidney, liver and testis. In the CNS not all microglia express TREM2. Brain regions with an incomplete blood-brain barrier had the lowest percentages of TREM2 expressing microglia, whereas the lateral entorhinal and cingulate cortex had the highest percentages.

Its subcellular location is the cell membrane. The protein resides in the secreted. Functionally, forms a receptor signaling complex with TYROBP which mediates signaling and cell activation following ligand binding. Acts as a receptor for amyloid-beta protein 42, a cleavage product of the amyloid-beta precursor protein APP, and mediates its uptake and degradation by microglia. Binding to amyloid-beta 42 mediates microglial activation, proliferation, migration, apoptosis and expression of pro-inflammatory cytokines, such as IL6R and CCL3, and the anti-inflammatory cytokine ARG1. Acts as a receptor for lipoprotein particles such as LDL, VLDL, and HDL and for apolipoproteins such as APOA1, APOA2, APOB, APOE, APOE2, APOE3, APOE4, and CLU and enhances their uptake in microglia. Binds phospholipids (preferably anionic lipids) such as phosphatidylserine, phosphatidylethanolamine, phosphatidylglycerol and sphingomyelin. Regulates microglial proliferation by acting as an upstream regulator of the Wnt/beta-catenin signaling cascade. Required for microglial phagocytosis of apoptotic neurons. Also required for microglial activation and phagocytosis of myelin debris after neuronal injury and of neuronal synapses during synapse elimination in the developing brain. Regulates microglial chemotaxis and process outgrowth, and also the microglial response to oxidative stress and lipopolysaccharide. It suppresses PI3K and NF-kappa-B signaling in response to lipopolysaccharide; thus promoting phagocytosis, suppressing pro-inflammatory cytokine and nitric oxide production, inhibiting apoptosis and increasing expression of IL10 and TGFB. During oxidative stress, it promotes anti-apoptotic NF-kappa-B signaling and ERK signaling. Plays a role in microglial MTOR activation and metabolism. Regulates age-related changes in microglial numbers. Triggers activation of the immune responses in macrophages and dendritic cells. Mediates cytokine-induced formation of multinucleated giant cells which are formed by the fusion of macrophages. In dendritic cells, receptor of SEMA6D with PLEXNA1 as coreceptor and mediates up-regulation of chemokine receptor CCR7 and dendritic cell maturation and survival. Involved in the positive regulation of osteoclast differentiation. The polypeptide is Triggering receptor expressed on myeloid cells 2 (Trem2) (Mus musculus (Mouse)).